The primary structure comprises 469 residues: Sorting and assembly machinery component 50 homolog (469 aa).

Positions 1 to 20 (MGTVHARSLEPLPSSGPDFG) are disordered. In terms of domain architecture, POTRA spans 45–125 (VVVQHVHFDG…LDVTFEVTEL (81 aa)). An N6-methyllysine modification is found at K255.

Belongs to the SAM50/omp85 family. As to quaternary structure, associates with the mitochondrial contact site and cristae organizing system (MICOS) complex, composed of at least MICOS10/MIC10, CHCHD3/MIC19, CHCHD6/MIC25, APOOL/MIC27, IMMT/MIC60, APOO/MIC23/MIC26 and QIL1/MIC13. This complex was also known under the names MINOS or MitOS complex. The MICOS complex associates with mitochondrial outer membrane proteins SAMM50, MTX1 and MTX2 (together described as components of the mitochondrial outer membrane sorting assembly machinery (SAM) complex) and DNAJC11, mitochondrial inner membrane protein TMEM11 and with HSPA9. The MICOS and SAM complexes together with DNAJC11 are part of a large protein complex spanning both membranes termed the mitochondrial intermembrane space bridging (MIB) complex. Interacts with CHCHD3/MIC19. Interacts with ARMC1. In terms of assembly, (Microbial infection) Interacts with parasite T.gondii RH strain MAF1b1; the interaction is probably indirect and results in the disruption of the MIB complex and the formation of SPOTs (structures positive for outer mitochondrial membrane (OMM)), a cellular response to OMM stress, which leads to the constitutive shedding of OMM vesicles.

Its subcellular location is the mitochondrion outer membrane. It is found in the cytoplasm. The protein resides in the mitochondrion. Its function is as follows. Plays a crucial role in the maintenance of the structure of mitochondrial cristae and the proper assembly of the mitochondrial respiratory chain complexes. Required for the assembly of TOMM40 into the TOM complex. The chain is Sorting and assembly machinery component 50 homolog (SAMM50) from Homo sapiens (Human).